The sequence spans 646 residues: MAKIIGIDLGTTNSCVAVLEGDKVKVIENAEGARTTPSIIAYKDGEILVGQSAKRQAVTNPKNTLFAIKRLIGRRYEDQAVQKDIGLVPYKIIKADNGDAWVEVNDKKLAPQQISAEILKKMKKTAEDYLGETVTEAVITVPAYFNDAQRQATKDAGKIAGLDVKRIINEPTAAALAFGMDKKEGDRKVAVYDLGGGTFDVSIIEIADLDGDQQIEVLSTNGDTFLGGEDFDNALIEYLVEEFKKEQNVNLKNDPLALQRLKEAAEKAKIELSSSNATEINLPYITADATGPKHLVINVTRAKLEGLVADLVARTIEPCKIALKDAGLSTSDISDVILVGGQSRMPLVQQKVQEFFGREPRKDVNPDEAVAIGAAIQGAVLSGDKNDVLLLDVTPLTLGIETMGGVLTPIIEKNTTIPAKKSQVFSTAADNQPAVDISVYQGERKMAQQNKLLGNFQLGDIPPAPRGVPQIEVSFDINADGILKVSAKDKSTGKEQSIQIKANSGLSDAEIEAMIKDAEANAEEDRKFEELAKARNEADALISSSNKAVKDLGDKVTEDEKTAVNTAVSELEAATKENDVEVIKAKTEALQNILMPITQRAYEQAQQAGGAEGFDPNAFQGGDAGQQKADDGVVDAEFTEVKDDKK.

A Phosphothreonine; by autocatalysis modification is found at threonine 198. A disordered region spans residues 603 to 646 (EQAQQAGGAEGFDPNAFQGGDAGQQKADDGVVDAEFTEVKDDKK). The segment covering 618–627 (AFQGGDAGQQ) has biased composition (low complexity).

This sequence belongs to the heat shock protein 70 family.

Functionally, acts as a chaperone. In Acinetobacter baumannii (strain AB307-0294), this protein is Chaperone protein DnaK.